The following is a 488-amino-acid chain: Glutamyl-tRNA(Gln) amidotransferase subunit A (488 aa).

Active-site charge relay system residues include lysine 76 and serine 151. The active-site Acyl-ester intermediate is the serine 175.

This sequence belongs to the amidase family. GatA subfamily. In terms of assembly, heterotrimer of A, B and C subunits.

It carries out the reaction L-glutamyl-tRNA(Gln) + L-glutamine + ATP + H2O = L-glutaminyl-tRNA(Gln) + L-glutamate + ADP + phosphate + H(+). Allows the formation of correctly charged Gln-tRNA(Gln) through the transamidation of misacylated Glu-tRNA(Gln) in organisms which lack glutaminyl-tRNA synthetase. The reaction takes place in the presence of glutamine and ATP through an activated gamma-phospho-Glu-tRNA(Gln). This is Glutamyl-tRNA(Gln) amidotransferase subunit A from Symbiobacterium thermophilum (strain DSM 24528 / JCM 14929 / IAM 14863 / T).